The chain runs to 1969 residues: TP53-binding protein 1 (1969 aa).

A disordered region spans residues 1 to 24 (MPGEQMDPTGSQLDSDFSQQDTPC). A compositionally biased stretch (polar residues) spans 8 to 22 (PTGSQLDSDFSQQDT). 3 positions are modified to phosphoserine: S30, S68, and S73. The tract at residues 67–168 (VSNPEQSAVE…DSLAAEDSAS (102 aa)) is disordered. Polar residues predominate over residues 69–85 (NPEQSAVEQGDSNSSFN). Residues 86–95 (EHLKEKKASD) are compositionally biased toward basic and acidic residues. Over residues 101-110 (HLGTSGSISQ) the composition is skewed to polar residues. S109 carries the phosphoserine modification. A compositionally biased stretch (acidic residues) spans 135–148 (PEEEKEEEELEEEK). The span at 158–168 (ADSLAAEDSAS) shows a compositional bias: low complexity. Phosphoserine is present on residues S169, S179, and S181. K220 is covalently cross-linked (Glycyl lysine isopeptide (Lys-Gly) (interchain with G-Cter in SUMO1); alternate). Residue K220 forms a Glycyl lysine isopeptide (Lys-Gly) (interchain with G-Cter in SUMO2); alternate linkage. Disordered regions lie at residues 254 to 337 (EQNL…VSTP), 352 to 599 (LVQE…CKGR), and 614 to 707 (DSGS…CPEA). S267 and S268 each carry phosphoserine. Basic and acidic residues predominate over residues 277–288 (ETKEQVPARELL). Positions 294-324 (VQPSSEPEVSSTQEDLFDQSSKTASDGCSTP) are enriched in polar residues. S297 bears the Phosphoserine mark. T305 bears the Phosphothreonine mark. A phosphoserine mark is found at S368, S382, and S397. The span at 407 to 419 (QKLHDDEAMETEK) shows a compositional bias: basic and acidic residues. A compositionally biased stretch (polar residues) spans 426-442 (PAVSPQASTPVSRSTPV). Residues S429, S452, and S464 each carry the phosphoserine modification. Residues 481 to 490 (HSSSLTVECS) are compositionally biased toward polar residues. The span at 491–501 (KTSESEPKNFT) shows a compositional bias: basic and acidic residues. 4 positions are modified to phosphoserine: S507, S518, S523, and S525. The segment covering 517 to 528 (LSTSEYSQSSKM) has biased composition (polar residues). T543 and T548 each carry phosphothreonine. Phosphoserine is present on residues S552 and S579. The segment covering 566–582 (VLVTPSQDDQVEMSQNV) has biased composition (polar residues). Positions 583-599 (DKAKEDETEDRGDCKGR) are enriched in basic and acidic residues. Residues 614-634 (DSGSQAVPSPATRSEALSSVL) are compositionally biased toward polar residues. A phosphoserine mark is found at S622, S627, S631, and S632. Positions 640-649 (MDTKEHHPEE) are enriched in basic and acidic residues. Position 662 is a phosphothreonine (T662). Basic and acidic residues predominate over residues 666–675 (SHREEPKEEP). A phosphoserine mark is found at S684, S716, S719, and S763. Residues 754–870 (KEPSPRADVS…DDKQLGPEGA (117 aa)) form a disordered region. Basic and acidic residues predominate over residues 790-818 (AENRLDTPEEKRIECDGDSKAETTEKDAV). The residue at position 822 (S822) is a Phosphoserine. A compositionally biased stretch (basic and acidic residues) spans 830–839 (VRDEPVRPDQ). The residue at position 912 (T912) is a Phosphothreonine. K920 participates in a covalent cross-link: Glycyl lysine isopeptide (Lys-Gly) (interchain with G-Cter in SUMO2). A disordered region spans residues 927 to 1017 (STPIGISNYP…GSTAIAEPVA (91 aa)). The segment covering 935–949 (YPESTIATSDVTSES) has biased composition (polar residues). The span at 961–975 (EKGDSESAPEMDGKL) shows a compositional bias: basic and acidic residues. Residue S965 is modified to Phosphoserine. K974 participates in a covalent cross-link: Glycyl lysine isopeptide (Lys-Gly) (interchain with G-Cter in SUMO2). S1018 bears the Phosphoserine mark. Disordered stretches follow at residues 1034-1144 (QEKE…MDRP), 1178-1231 (GTST…PHGH), and 1267-1478 (TEET…DSSS). Residues 1060–1074 (EEDKERPDVTPKLRQ) are compositionally biased toward basic and acidic residues. A phosphoserine mark is found at S1075 and S1096. Residues 1099–1112 (SQQRASQEQRASQE) show a composition bias toward low complexity. Position 1115 is a phosphoserine (S1115). Residues 1178 to 1197 (GTSTAEQNSGKQDATVQTER) are compositionally biased toward polar residues. Phosphothreonine is present on T1211. A phosphoserine mark is found at S1213 and S1216. Over residues 1269–1282 (ETEEPIVECQECET) the composition is skewed to acidic residues. Positions 1295-1326 (DLGDISSFSSKASSSHHTSSGTSLSAIHSSGS) are enriched in low complexity. Residue S1314 is modified to Phosphoserine. R1329 carries the omega-N-methylarginine modification. Residue S1339 is modified to Phosphoserine. R1352 carries the omega-N-methylarginine modification. S1359 is modified (phosphoserine). Residue K1362 forms a Glycyl lysine isopeptide (Lys-Gly) (interchain with G-Cter in SUMO2) linkage. S1365 is modified (phosphoserine). Residues 1393 to 1400 (RGRGRRGR) carry the GAR motif. Residues S1423 and S1427 each carry the phosphoserine modification. K1431 participates in a covalent cross-link: Glycyl lysine isopeptide (Lys-Gly) (interchain with G-Cter in SUMO1); alternate. Residue K1431 forms a Glycyl lysine isopeptide (Lys-Gly) (interchain with G-Cter in SUMO2); alternate linkage. Phosphoserine is present on residues S1457, S1459, S1470, and S1471. Residues 1469 to 1478 (GSSDGLDSSS) are compositionally biased toward low complexity. Residues 1481–1600 (NSFVGLRVVA…NRLREQYGLG (120 aa)) are tudor-like. The tract at residues 1492–1520 (WSSNGYFYSGKITRDVGAGKYKLLFDDGY) is interaction with dimethylated histone H4. Residue K1560 forms a Glycyl lysine isopeptide (Lys-Gly) (interchain with G-Cter in SUMO1); alternate linkage. A Glycyl lysine isopeptide (Lys-Gly) (interchain with G-Cter in SUMO2); alternate cross-link involves residue K1560. The short motif at 1601 to 1628 (PYEAVTPLTKAADISLDNLVEGKRKRRS) is the UDR element. T1606 bears the Phosphothreonine mark. Phosphoserine occurs at positions 1615, 1628, and 1632. Residues 1624–1715 (RKRRSNISSP…IGEPSVLEEP (92 aa)) are disordered. The segment covering 1631–1648 (SSPVTPTAASSSSTTPTR) has biased composition (low complexity). A phosphothreonine mark is found at T1635 and T1645. 3 positions are modified to phosphoserine: S1653, S1670, and S1675. Residue K1682 forms a Glycyl lysine isopeptide (Lys-Gly) (interchain with G-Cter in ubiquitin) linkage. A phosphoserine mark is found at S1698 and S1756. BRCT domains follow at residues 1749–1845 (LDGP…NYLL) and 1861–1961 (PREN…QHPK).

Homoligomer. Interacts with p53/TP53 (via the central domain). Interacts with DCLRE1C. Interacts with histone H2AX and this requires phosphorylation of H2AX on 'Ser-139'. Interacts with histone H4 that has been dimethylated at 'Lys-20' (H4K20me2). Has low affinity for histone H4 containing monomethylated 'Lys-20' (H4K20me1). Does not bind histone H4 containing unmethylated or trimethylated 'Lys-20' (H4K20me3). Has low affinity for histone H3 that has been dimethylated on 'Lys-79'. Has very low affinity for histone H3 that has been monomethylated on 'Lys-79' (in vitro). Does not bind unmethylated histone H3. Interacts with histone H2A monoubiquitinated at 'Lys-15' (H2AK15Ub). Interacts with PWWP3A/EXPAND1. Interacts with CHEK2; modulates CHEK2 phosphorylation at 'Thr-68' in response to infrared. Interacts with MSL1; this interaction may be required for MSL1 DNA repair activity, but not for histone acetyltransferase activity. Interacts (when phosphorylated by ATM) with RIF1. Interacts (via the Tudor-like domain) with NUDT16L1/TIRR; interaction masks the Tudor-like domain and prevents recruitment to chromatin. Interacts with PAXIP1. Interacts with IFI202A. Interacts with SHLD2. Interacts (when phosphorylated) with TOPBP1. Interacts with GFI1; promoting methylation by PRMT1. Interacts with (phosphorylated) DYNLL1; specifically binds DYNLL1 phosphorylated at 'Ser-88' and promotes its recruitment to double stand breaks (DSBs). Phosphorylated at basal level in the absence of DNA damage. Phosphorylated by ATM in response to DNA damage: phosphorylation at different sites promotes interaction with different set of proteins: phosphorylation at the N-terminus by ATM (residues from 11-181) promotes interaction with PAXIP1 and non-homologous end joining (NHEJ) of dysfunctional telomeres. Phosphorylation by ATM at residues that are located more C-terminus (residues 300-650) leads to promote interaction with RIF1. Interaction with RIF1 leads to disrupt interaction with NUDT16L1/TIRR. Phosphorylation at Thr-1606 and Ser-1615 in the UDR motif blocks interaction with H2AK15ub. Dephosphorylated by PPP4C. Hyperphosphorylation during mitosis correlates with its exclusion from chromatin and DNA lesions. Hyperphosphorylated in an ATR-dependent manner in response to DNA damage induced by UV irradiation. Dephosphorylated by PPP5C. Phosphorylation at Ser-368 and Thr-662 promotes interaction with TOPBP1. Phosphorylated by VRK1. Post-translationally, asymmetrically dimethylated on Arg residues by PRMT1. Methylation is required for DNA binding. In terms of processing, monoubiquitinated at Lys-1682 by MSL2 is reponse to DNA damage, leading to its stabilization.

The protein resides in the nucleus. Its subcellular location is the chromosome. The protein localises to the centromere. It is found in the kinetochore. Functionally, double-strand break (DSB) repair protein involved in response to DNA damage, telomere dynamics and class-switch recombination (CSR) during antibody genesis. Plays a key role in the repair of double-strand DNA breaks (DSBs) in response to DNA damage by promoting non-homologous end joining (NHEJ)-mediated repair of DSBs and specifically counteracting the function of the homologous recombination (HR) repair protein BRCA1. In response to DSBs, phosphorylation by ATM promotes interaction with RIF1 and dissociation from NUDT16L1/TIRR, leading to recruitment to DSBs sites. Recruited to DSBs sites by recognizing and binding histone H2A monoubiquitinated at 'Lys-15' (H2AK15Ub) and histone H4 dimethylated at 'Lys-20' (H4K20me2), two histone marks that are present at DSBs sites. Required for immunoglobulin class-switch recombination (CSR) during antibody genesis, a process that involves the generation of DNA DSBs. Participates in the repair and the orientation of the broken DNA ends during CSR. In contrast, it is not required for classic NHEJ and V(D)J recombination. Promotes NHEJ of dysfunctional telomeres. This is TP53-binding protein 1 from Mus musculus (Mouse).